A 127-amino-acid chain; its full sequence is Large ribosomal subunit protein bL12 (127 aa).

Belongs to the bacterial ribosomal protein bL12 family. Homodimer. Part of the ribosomal stalk of the 50S ribosomal subunit. Forms a multimeric L10(L12)X complex, where L10 forms an elongated spine to which 2 to 4 L12 dimers bind in a sequential fashion. Binds GTP-bound translation factors.

Functionally, forms part of the ribosomal stalk which helps the ribosome interact with GTP-bound translation factors. Is thus essential for accurate translation. In Symbiobacterium thermophilum (strain DSM 24528 / JCM 14929 / IAM 14863 / T), this protein is Large ribosomal subunit protein bL12.